Here is a 303-residue protein sequence, read N- to C-terminus: Glutamyl-Q tRNA(Asp) synthetase (303 aa).

Residues 9–13 (RFAPS) and glutamate 45 each bind L-glutamate. The 'HIGH' region signature appears at 12–22 (PSPSGSLHFGS). Zn(2+) contacts are provided by cysteine 101, cysteine 103, tyrosine 115, and cysteine 119. L-glutamate is bound by residues tyrosine 172 and arginine 190. The 'KMSKS' region signature appears at 228-232 (KLSKQ). Residue lysine 231 participates in ATP binding.

Belongs to the class-I aminoacyl-tRNA synthetase family. GluQ subfamily. It depends on Zn(2+) as a cofactor.

In terms of biological role, catalyzes the tRNA-independent activation of glutamate in presence of ATP and the subsequent transfer of glutamate onto a tRNA(Asp). Glutamate is transferred on the 2-amino-5-(4,5-dihydroxy-2-cyclopenten-1-yl) moiety of the queuosine in the wobble position of the QUC anticodon. The sequence is that of Glutamyl-Q tRNA(Asp) synthetase from Serratia proteamaculans (strain 568).